The chain runs to 501 residues: Lysine--tRNA ligase (501 aa).

Mg(2+) contacts are provided by glutamate 411 and glutamate 418.

The protein belongs to the class-II aminoacyl-tRNA synthetase family. Homodimer. Mg(2+) serves as cofactor.

It localises to the cytoplasm. The catalysed reaction is tRNA(Lys) + L-lysine + ATP = L-lysyl-tRNA(Lys) + AMP + diphosphate. The polypeptide is Lysine--tRNA ligase (Clostridium perfringens (strain SM101 / Type A)).